Consider the following 147-residue polypeptide: Large ribosomal subunit protein uL15 (147 aa).

Residues methionine 1–arginine 47 form a disordered region. Positions threonine 23–glutamine 35 are enriched in gly residues.

The protein belongs to the universal ribosomal protein uL15 family. As to quaternary structure, part of the 50S ribosomal subunit.

Its function is as follows. Binds to the 23S rRNA. This Clostridioides difficile (strain 630) (Peptoclostridium difficile) protein is Large ribosomal subunit protein uL15.